A 159-amino-acid chain; its full sequence is Ribosomal RNA large subunit methyltransferase H (159 aa).

S-adenosyl-L-methionine is bound at residue Gly108.

This sequence belongs to the RNA methyltransferase RlmH family. In terms of assembly, homodimer.

The protein resides in the cytoplasm. It catalyses the reaction pseudouridine(1915) in 23S rRNA + S-adenosyl-L-methionine = N(3)-methylpseudouridine(1915) in 23S rRNA + S-adenosyl-L-homocysteine + H(+). Specifically methylates the pseudouridine at position 1915 (m3Psi1915) in 23S rRNA. In Lactobacillus johnsonii (strain CNCM I-12250 / La1 / NCC 533), this protein is Ribosomal RNA large subunit methyltransferase H.